Reading from the N-terminus, the 206-residue chain is Ribonuclease HII (206 aa).

The region spanning 14-206 (EFICGIDEVG…FKLRQLGEKV (193 aa)) is the RNase H type-2 domain. Positions 20, 21, and 117 each coordinate a divalent metal cation.

Belongs to the RNase HII family. Mn(2+) serves as cofactor. Mg(2+) is required as a cofactor.

The protein resides in the cytoplasm. It catalyses the reaction Endonucleolytic cleavage to 5'-phosphomonoester.. Functionally, endonuclease that specifically degrades the RNA of RNA-DNA hybrids. This is Ribonuclease HII from Chlorobium chlorochromatii (strain CaD3).